Reading from the N-terminus, the 545-residue chain is Arginine-containing cyclodipeptide synthase ateA (545 aa).

Positions 390 to 425 are enriched in polar residues; it reads GNQQTPTQSADMDSTVSHRQQQPASSRSYTSKQNQM. Residues 390–433 form a disordered region; the sequence is GNQQTPTQSADMDSTVSHRQQQPASSRSYTSKQNQMPRPLVISV. Positions 434–438 match the Conserved DDXXE motif motif; sequence DDPSE.

Belongs to the arginine-containing cyclodipeptide synthase family.

The enzyme catalyses L-glutamyl-tRNA(Glu) + L-arginyl-tRNA(Arg) = cyclo(L-arginyl-L-glutamyl) + tRNA(Glu) + tRNA(Arg) + 2 H(+). Its pathway is secondary metabolite biosynthesis. Functionally, arginine-containing cyclodipeptide synthase; part of the cluster that mediates the biosynthesis of a highly modified cyclo-arginine-glutamate dipeptide (cRE). Within the pathway, ateA acts as the scaffold-generating enzyme and is responsible for formation of the cyclo-Arg-Glu diketopiperazine (cRW) from L-arginyl-tRNA(Arg) + L-glutamyl-tRNA(Glu). Additional enzymes from the cluster then further modify the cyclo-Arg-Glu diketopiperazine (cRW) scaffold. The polypeptide is Arginine-containing cyclodipeptide synthase ateA (Aspergillus terreus).